The sequence spans 150 residues: MGIKIIANNKKAYHDYFIDEVLEAGMVLLGTEVKSLRLGKANLKDAFCRIMGGELYVNNLHISPYEFGNRENADPTRARKLLVHRAELDKLARKVDEKGLSLVPTKLYFKEGRVKIEIGIARGKKLHDKRQTLKSKEADREMARALRDRH.

A disordered region spans residues 129–150 (KRQTLKSKEADREMARALRDRH).

Belongs to the SmpB family.

Its subcellular location is the cytoplasm. Its function is as follows. Required for rescue of stalled ribosomes mediated by trans-translation. Binds to transfer-messenger RNA (tmRNA), required for stable association of tmRNA with ribosomes. tmRNA and SmpB together mimic tRNA shape, replacing the anticodon stem-loop with SmpB. tmRNA is encoded by the ssrA gene; the 2 termini fold to resemble tRNA(Ala) and it encodes a 'tag peptide', a short internal open reading frame. During trans-translation Ala-aminoacylated tmRNA acts like a tRNA, entering the A-site of stalled ribosomes, displacing the stalled mRNA. The ribosome then switches to translate the ORF on the tmRNA; the nascent peptide is terminated with the 'tag peptide' encoded by the tmRNA and targeted for degradation. The ribosome is freed to recommence translation, which seems to be the essential function of trans-translation. The polypeptide is SsrA-binding protein (Syntrophotalea carbinolica (strain DSM 2380 / NBRC 103641 / GraBd1) (Pelobacter carbinolicus)).